A 967-amino-acid polypeptide reads, in one-letter code: LRR receptor-like serine/threonine-protein kinase ERL2 (967 aa).

The N-terminal stretch at 1 to 27 (MRRIETMKGLFFCLGMVVFMLLGSVSP) is a signal peptide. Topologically, residues 28–585 (MNNEGKALMA…SLPKSQVFTR (558 aa)) are extracellular. N-linked (GlcNAc...) asparagine glycosylation is found at Asn70 and Asn79. LRR repeat units lie at residues 74 to 97 (NVVS…GDLM), 98 to 120 (NLQS…IGNC), 122 to 145 (SLAY…SKLK), 146 to 166 (QLEF…ATLT), 170 to 192 (NLKT…LYWN), 194 to 216 (VLQY…MCQL), 218 to 240 (GLWY…IGNC), 242 to 261 (SFEI…PYNI), 265 to 287 (QVAT…IGLM), 289 to 311 (ALAV…LGNL), 313 to 335 (FTGK…LGNM), 337 to 359 (RLSY…LGKL), 361 to 382 (QLFE…NISS), 385 to 406 (ALNQ…EFRN), 409 to 431 (SLTY…LGHI), 433 to 456 (NLDT…GDLE), 457 to 479 (HLLI…FGNL), 481 to 503 (SIQI…LGQL), 505 to 527 (NINS…LTNC), and 529 to 550 (SLAN…MKNF). N-linked (GlcNAc...) asparagine glycans are attached at residues Asn228 and Asn239. Residues Asn310 and Asn334 are each glycosylated (N-linked (GlcNAc...) asparagine). N-linked (GlcNAc...) asparagine glycosylation occurs at Asn379. N-linked (GlcNAc...) asparagine glycans are attached at residues Asn414, Asn443, Asn462, and Asn469. Asn534, Asn539, and Asn549 each carry an N-linked (GlcNAc...) asparagine glycan. A helical membrane pass occupies residues 586-606 (VAVICMVLGFITLICMIFIAV). Residues 607 to 967 (YKSKQQKPVL…FREDISKSSL (361 aa)) are Cytoplasmic-facing. Phosphothreonine occurs at positions 640 and 648. In terms of domain architecture, Protein kinase spans 651–921 (LDEKYIIGYG…EVSRVLLSLV (271 aa)). ATP-binding positions include 657 to 665 (IGYGASSTV) and Lys679. Residues Tyr724 and Tyr763 each carry the phosphotyrosine modification. Asp776 (proton acceptor) is an active-site residue. Tyr818 is subject to Phosphotyrosine. A Phosphothreonine modification is found at Thr826. The segment at 921–955 (VPSPPPKKLPSPAKVQEGEERRESHSSDTTTPQWF) is disordered. Over residues 936–946 (QEGEERRESHS) the composition is skewed to basic and acidic residues.

Belongs to the protein kinase superfamily. Ser/Thr protein kinase family. As to expression, mostly expressed in developing organs, including bud clusters, flowers, siliques and young rosettes. Also detected in mature aboveground organs, such as leaves, stems and pedicels, but barely in roots.

The protein localises to the membrane. The catalysed reaction is L-seryl-[protein] + ATP = O-phospho-L-seryl-[protein] + ADP + H(+). It catalyses the reaction L-threonyl-[protein] + ATP = O-phospho-L-threonyl-[protein] + ADP + H(+). Functionally, receptor kinase that regulates inflorescence architecture and organ shape as well as stomatal patterning, including density and clustering, together with ERL1 and ER. This chain is LRR receptor-like serine/threonine-protein kinase ERL2 (ERL2), found in Arabidopsis thaliana (Mouse-ear cress).